A 334-amino-acid polypeptide reads, in one-letter code: L-lactate dehydrogenase B chain (334 aa).

NAD(+) is bound by residues 30 to 58 (GQVG…LEDK) and arginine 100. Substrate is bound by residues arginine 107, asparagine 139, and arginine 170. Asparagine 139 contacts NAD(+). Histidine 194 acts as the Proton acceptor in catalysis. Threonine 249 is a substrate binding site.

This sequence belongs to the LDH/MDH superfamily. LDH family. In terms of assembly, homotetramer.

The protein localises to the cytoplasm. The enzyme catalyses (S)-lactate + NAD(+) = pyruvate + NADH + H(+). It participates in fermentation; pyruvate fermentation to lactate; (S)-lactate from pyruvate: step 1/1. Its function is as follows. Interconverts simultaneously and stereospecifically pyruvate and lactate with concomitant interconversion of NADH and NAD(+). The polypeptide is L-lactate dehydrogenase B chain (ldhb) (Squalus acanthias (Spiny dogfish)).